Consider the following 876-residue polypeptide: Phosphoenolpyruvate carboxylase (876 aa).

Catalysis depends on residues histidine 138 and lysine 543.

The protein belongs to the PEPCase type 1 family. The cofactor is Mg(2+).

It carries out the reaction oxaloacetate + phosphate = phosphoenolpyruvate + hydrogencarbonate. Its function is as follows. Forms oxaloacetate, a four-carbon dicarboxylic acid source for the tricarboxylic acid cycle. This chain is Phosphoenolpyruvate carboxylase, found in Vibrio atlanticus (strain LGP32) (Vibrio splendidus (strain Mel32)).